Reading from the N-terminus, the 159-residue chain is Cyclic pyranopterin monophosphate synthase (159 aa).

Substrate-binding positions include L75–H77 and M113–E114. Residue D128 is part of the active site.

It belongs to the MoaC family. As to quaternary structure, homohexamer; trimer of dimers.

The catalysed reaction is (8S)-3',8-cyclo-7,8-dihydroguanosine 5'-triphosphate = cyclic pyranopterin phosphate + diphosphate. Its pathway is cofactor biosynthesis; molybdopterin biosynthesis. In terms of biological role, catalyzes the conversion of (8S)-3',8-cyclo-7,8-dihydroguanosine 5'-triphosphate to cyclic pyranopterin monophosphate (cPMP). The protein is Cyclic pyranopterin monophosphate synthase of Photorhabdus laumondii subsp. laumondii (strain DSM 15139 / CIP 105565 / TT01) (Photorhabdus luminescens subsp. laumondii).